The sequence spans 410 residues: Protein BTN2 (410 aa).

Disordered regions lie at residues 223-264 (INEP…TKED) and 276-410 (MQEE…IEEI). Composition is skewed to basic and acidic residues over residues 233–264 (SKIDESHDDVNMSESLKEEEAEKAKEPLTKED) and 276–311 (MQEESRKSEQEKAAKEDEERQKKEKEARLKARKESL). Residues 243–330 (NMSESLKEEE…QQKKLQNSKS (88 aa)) are a coiled coil. Low complexity predominate over residues 334–362 (SEIEASNKNNNSNSGSAESDNESINSDSD). A compositionally biased stretch (polar residues) spans 364–373 (TLDFSVSGNT).

In terms of assembly, interacts with RHB1, IST2, TDA3 and YIF1.

The protein resides in the cytoplasm. It localises to the late endosome. Its function is as follows. V-SNARE binding protein that facilitates specific protein retrieval from a late endosome to the Golgi. Modulates the rate of arginine uptake. Involved in pH homeostasis. Required for the correct localization of IST2. May be involved in ion homeostasis together with IST2. The protein is Protein BTN2 (BTN2) of Saccharomyces cerevisiae (strain ATCC 204508 / S288c) (Baker's yeast).